A 765-amino-acid chain; its full sequence is Probable dehydratase PflD (765 aa).

The 635-residue stretch at 3-637 folds into the PFL domain; sequence NRISRLKTAL…VVGATPDGRF (635 aa). Residues 645 to 765 enclose the Glycine radical domain; sequence GGLSPMLGQD…DIIRRTAHQL (121 aa). Gly741 bears the Glycine radical mark.

It belongs to the glycyl radical enzyme (GRE) family.

Functionally, probably shows dehydratase activity. This Escherichia coli (strain K12) protein is Probable dehydratase PflD (pflD).